The sequence spans 523 residues: MTNIHNHKILILDFGSQYTQLIARRVREIGVYCELWAWDVTEQQIREFAPTGIILSGGPESTTEENSPRAPEYVFNAGVPVLGVCYGMQTMAMQLGGLTETSDHREFGYASVSLENSTALFANLNDNSTASEPKLDVWMSHGDKVTRLPENFKVTGTTLTCPIAAMSDENRRFYGVQFHPEVTHTKKGLELLTNFVVNICGCETKWTAENIIEDAVARIKEQVGNDEVILGLSGGVDSSVVALLLHRAIGKNLHCVFVDNGLLRLHEGDQVMEMFGDKFGLNITRVDAESRFLGELAGVSDPEAKRKIIGKVFVDVFDDESKKLTNVKWLAQGTIYPDVIESAASKTGKAHVIKSHHNVGGLPDYMKLGLVEPLRELFKDEVRKIGLALGLPAEMINRHPFPGPGLGVRVLGEVKKEYCDLLRRADAIFIEELRNSGWYEKTSQAFSVFLPVKSVGVMGDGRKYDWVISLRAVETIDFMTAHWAHLPYDLLGKVSNRIINEVNGISRVVYDISGKPPATIEWE.

One can recognise a Glutamine amidotransferase type-1 domain in the interval 8-205 (KILILDFGSQ…VVNICGCETK (198 aa)). Cys85 functions as the Nucleophile in the catalytic mechanism. Active-site residues include His179 and Glu181. A GMPS ATP-PPase domain is found at 206–398 (WTAENIIEDA…LGLPAEMINR (193 aa)). 233-239 (SGGVDSS) serves as a coordination point for ATP.

Homodimer.

The catalysed reaction is XMP + L-glutamine + ATP + H2O = GMP + L-glutamate + AMP + diphosphate + 2 H(+). Its pathway is purine metabolism; GMP biosynthesis; GMP from XMP (L-Gln route): step 1/1. Functionally, catalyzes the synthesis of GMP from XMP. The chain is GMP synthase [glutamine-hydrolyzing] from Haemophilus influenzae (strain PittGG).